Here is a 578-residue protein sequence, read N- to C-terminus: Protein O-linked-mannose beta-1,4-N-acetylglucosaminyltransferase 2 (578 aa).

Residues 1 to 4 (MNIS) are Cytoplasmic-facing. Residues 5–25 (AVFSALLVSIMAAVLWKHVKL) form a helical; Signal-anchor for type II membrane protein membrane-spanning segment. Residues 26-578 (LDQFYVIEEE…PFAEVLVCST (553 aa)) lie on the Lumenal side of the membrane. Residues N98, N275, N335, N451, N541, and N563 are each glycosylated (N-linked (GlcNAc...) asparagine). The 95-residue stretch at 484–578 (RESKCQASAQ…PFAEVLVCST (95 aa)) folds into the Fibronectin type-III domain.

Belongs to the glycosyltransferase 61 family.

The protein resides in the endoplasmic reticulum membrane. The catalysed reaction is 3-O-(alpha-D-mannosyl)-L-threonyl-[protein] + UDP-N-acetyl-alpha-D-glucosamine = 3-O-(N-acetyl-beta-D-glucosaminyl-(1-&gt;4)-alpha-D-mannosyl)-L-threonyl-[protein] + UDP + H(+). Its pathway is protein modification; protein glycosylation. Functionally, O-linked mannose beta-1,4-N-acetylglucosaminyltransferase that transfers UDP-N-acetyl-D-glucosamine to the 4-position of the mannose to generate N-acetyl-D-glucosamine-beta-1,4-O-D-mannosylprotein. Involved in the biosynthesis of the phosphorylated O-mannosyl trisaccharide (N-acetylgalactosamine-beta-3-N-acetylglucosamine-beta-4-(phosphate-6-)mannose), a carbohydrate structure present in alpha-dystroglycan (DAG1), which is required for binding laminin G-like domain-containing extracellular proteins with high affinity. The chain is Protein O-linked-mannose beta-1,4-N-acetylglucosaminyltransferase 2 (pomgnt2) from Xenopus laevis (African clawed frog).